The sequence spans 162 residues: Crossover junction endodeoxyribonuclease RuvC (162 aa).

Catalysis depends on residues D7, E67, and D140. 3 residues coordinate Mg(2+): D7, E67, and D140.

It belongs to the RuvC family. Homodimer which binds Holliday junction (HJ) DNA. The HJ becomes 2-fold symmetrical on binding to RuvC with unstacked arms; it has a different conformation from HJ DNA in complex with RuvA. In the full resolvosome a probable DNA-RuvA(4)-RuvB(12)-RuvC(2) complex forms which resolves the HJ. Mg(2+) is required as a cofactor.

It localises to the cytoplasm. The enzyme catalyses Endonucleolytic cleavage at a junction such as a reciprocal single-stranded crossover between two homologous DNA duplexes (Holliday junction).. Its function is as follows. The RuvA-RuvB-RuvC complex processes Holliday junction (HJ) DNA during genetic recombination and DNA repair. Endonuclease that resolves HJ intermediates. Cleaves cruciform DNA by making single-stranded nicks across the HJ at symmetrical positions within the homologous arms, yielding a 5'-phosphate and a 3'-hydroxyl group; requires a central core of homology in the junction. The consensus cleavage sequence is 5'-(A/T)TT(C/G)-3'. Cleavage occurs on the 3'-side of the TT dinucleotide at the point of strand exchange. HJ branch migration catalyzed by RuvA-RuvB allows RuvC to scan DNA until it finds its consensus sequence, where it cleaves and resolves the cruciform DNA. The chain is Crossover junction endodeoxyribonuclease RuvC from Heliobacterium modesticaldum (strain ATCC 51547 / Ice1).